The following is a 201-amino-acid chain: Molybdenum cofactor guanylyltransferase (201 aa).

Residues 14–16 (LAG), Lys-31, and Asp-104 each bind GTP. Asp-104 provides a ligand contact to Mg(2+).

Belongs to the MobA family. As to quaternary structure, monomer. The cofactor is Mg(2+).

The protein localises to the cytoplasm. The catalysed reaction is Mo-molybdopterin + GTP + H(+) = Mo-molybdopterin guanine dinucleotide + diphosphate. Transfers a GMP moiety from GTP to Mo-molybdopterin (Mo-MPT) cofactor (Moco or molybdenum cofactor) to form Mo-molybdopterin guanine dinucleotide (Mo-MGD) cofactor. The protein is Molybdenum cofactor guanylyltransferase of Helicobacter pylori (strain P12).